Here is a 39-residue protein sequence, read N- to C-terminus: Cytochrome b6-f complex subunit 5 (39 aa).

A helical membrane pass occupies residues 5–25 (LLCGIVLGLVPITLLGLFVSA).

The protein belongs to the PetG family. The 4 large subunits of the cytochrome b6-f complex are cytochrome b6, subunit IV (17 kDa polypeptide, PetD), cytochrome f and the Rieske protein, while the 4 small subunits are PetG, PetL, PetM and PetN. The complex functions as a dimer.

Its subcellular location is the cellular thylakoid membrane. Component of the cytochrome b6-f complex, which mediates electron transfer between photosystem II (PSII) and photosystem I (PSI), cyclic electron flow around PSI, and state transitions. PetG is required for either the stability or assembly of the cytochrome b6-f complex. This Prochlorococcus marinus (strain MIT 9515) protein is Cytochrome b6-f complex subunit 5.